The primary structure comprises 306 residues: Brix domain-containing protein C4F8.04 (306 aa).

The disordered stretch occupies residues 16–49; that stretch reads KALHQKNKDKLERRKERAKEEEKDPEKKRLRLSE. Residues 21–42 are compositionally biased toward basic and acidic residues; that stretch reads KNKDKLERRKERAKEEEKDPEK. Residues 94-283 enclose the Brix domain; sequence PKLLVTTSKR…LRMVQKGVWD (190 aa).

The protein is Brix domain-containing protein C4F8.04 of Schizosaccharomyces pombe (strain 972 / ATCC 24843) (Fission yeast).